Consider the following 155-residue polypeptide: Deoxyuridine 5'-triphosphate nucleotidohydrolase (155 aa).

Substrate is bound by residues 74-76, Asn-87, and 91-93; these read RSG and LID.

The protein belongs to the dUTPase family. Requires Mg(2+) as cofactor.

The catalysed reaction is dUTP + H2O = dUMP + diphosphate + H(+). Its pathway is pyrimidine metabolism; dUMP biosynthesis; dUMP from dCTP (dUTP route): step 2/2. This enzyme is involved in nucleotide metabolism: it produces dUMP, the immediate precursor of thymidine nucleotides and it decreases the intracellular concentration of dUTP so that uracil cannot be incorporated into DNA. The protein is Deoxyuridine 5'-triphosphate nucleotidohydrolase of Xylella fastidiosa (strain M23).